Reading from the N-terminus, the 517-residue chain is GMP synthase [glutamine-hydrolyzing] (517 aa).

The Glutamine amidotransferase type-1 domain occupies 9–199; that stretch reads RILILDFGSQ…VLNVCGCEGL (191 aa). Cysteine 86 (nucleophile) is an active-site residue. Active-site residues include histidine 173 and glutamate 175. The GMPS ATP-PPase domain maps to 200–392; the sequence is WTSASIIEDA…LGLPYNMLYR (193 aa). 227–233 lines the ATP pocket; the sequence is SGGVDSS.

As to quaternary structure, homodimer.

It catalyses the reaction XMP + L-glutamine + ATP + H2O = GMP + L-glutamate + AMP + diphosphate + 2 H(+). It participates in purine metabolism; GMP biosynthesis; GMP from XMP (L-Gln route): step 1/1. Catalyzes the synthesis of GMP from XMP. The polypeptide is GMP synthase [glutamine-hydrolyzing] (Aliivibrio fischeri (strain MJ11) (Vibrio fischeri)).